An 83-amino-acid polypeptide reads, in one-letter code: Large ribosomal subunit protein bL27 (83 aa).

The interval 1 to 26 is disordered; that stretch reads MAHKKAGGSSKNGRDSRGQRRGVKRF.

This sequence belongs to the bacterial ribosomal protein bL27 family.

This Desulfosudis oleivorans (strain DSM 6200 / JCM 39069 / Hxd3) (Desulfococcus oleovorans) protein is Large ribosomal subunit protein bL27.